The sequence spans 1191 residues: Phosphatidylinositol 3,4,5-trisphosphate 5-phosphatase 1 (1191 aa).

The SH2 domain occupies 8–104 (WNHGNITRSK…GLVTHLQYPV (97 aa)). The disordered stretch occupies residues 122–148 (SVMSPPELPPRNIPMSAGPSEAKDLPL). An SH3-binding 1 motif is present at residues 127–132 (PELPPR). Ser246 carries the phosphoserine modification. An NPXY motif 1 motif is present at residues 915 to 918 (NPNY). Tyr918 carries the post-translational modification Phosphotyrosine. The residue at position 935 (Ser935) is a Phosphoserine. Tyr945 bears the Phosphotyrosine mark. Disordered stretches follow at residues 947-994 (QLPK…EARP) and 1021-1191 (YGSV…TAMQ). Residues 962 to 972 (PPTPPSQPPLS) are compositionally biased toward pro residues. At Thr964 the chain carries Phosphothreonine. 2 positions are modified to phosphoserine: Ser967 and Ser972. An SH3-binding 2 motif is present at residues 970–975 (PLSPKK). The interval 1015–1029 (MFENPLYGSVSSFPK) is interaction with DAB2. Residues 1018–1021 (NPLY) carry the NPXY motif 2 motif. Phosphotyrosine is present on Tyr1021. Residues 1032-1046 (PRKEQESPKMLRKEP) are compositionally biased toward basic and acidic residues. Residues 1039–1050 (PKMLRKEPPPCP) carry the SH3-binding 3 motif. Residues 1141–1150 (IPAPRPPLPV) are compositionally biased toward pro residues. Over residues 1162–1184 (KGRDYRDNTELPHHGKHRQEEGL) the composition is skewed to basic and acidic residues.

This sequence belongs to the inositol 1,4,5-trisphosphate 5-phosphatase family. As to quaternary structure, interacts with tyrosine phosphorylated form of SHC1. Interacts with tyrosine phosphorylated form of DOK1. Interacts with tyrosine phosphorylated form of DOK3. Interacts with tyrosine phosphorylated form of SLAMF1/CD150. Interacts with PTPN11/SHP-2 in response to IL-3. Interacts with receptor EPOR. Interacts with receptors MS4A2/FCER1B and FCER1G. Interacts with receptors FCGR2B and FCGR3. Interacts with receptor FCGR2A, leading to regulate gene expression during the phagocytic process. Interacts with GRB2. Interacts with PLCG1. Interacts with tyrosine kinases SRC and TEC. Interacts with CRKL. Interacts with c-Met/MET. Interacts with MILR1 (tyrosine-phosphorylated). Isoform 5 interacts with IL6ST/gp130. Can weakly interact (via NPXY motif 2) with DAB2 (via PID domain); the interaction is impaired by tyrosine phosphorylation of the NPXY motif. Interacts (via SH2 domain) with tyrosine phosphorylated KLRC1 (via ITIM). Interacts with MPL/TPOR. Post-translationally, tyrosine phosphorylated by the members of the SRC family after exposure to a diverse array of extracellular stimuli such as cytokines, growth factors, antibodies, chemokines, integrin ligands and hypertonic and oxidative stress. Phosphorylated upon IgG receptor FCGR2B-binding. As to expression, specifically expressed in immune and hematopoietic cells. Levels vary considerably within this compartment. Lost during erythropoiesis when erythroid cells become Ter119+. Increases substantially with T-cell maturation and when resting B-cells are activated. Also present in mature granulocytes, monocyte/macrophages, mast cells and platelets. Isoform 5 is the only form expressed in embryonic stem (ES) cells and is coexpressed with other isoforms in hematopoietic stem cells, and disappears with differentiation.

It localises to the cytoplasm. Its subcellular location is the cell membrane. The protein localises to the membrane raft. The protein resides in the cytoskeleton. The catalysed reaction is a 1,2-diacyl-sn-glycero-3-phospho-(1D-myo-inositol-3,4,5-trisphosphate) + H2O = a 1,2-diacyl-sn-glycero-3-phospho-(1D-myo-inositol-3,4-bisphosphate) + phosphate. It catalyses the reaction a 1,2-diacyl-sn-glycero-3-phospho-(1D-myo-inositol-4,5-bisphosphate) + H2O = a 1,2-diacyl-sn-glycero-3-phospho-(1D-myo-inositol 4-phosphate) + phosphate. The enzyme catalyses 1D-myo-inositol 1,3,4,5-tetrakisphosphate + H2O = 1D-myo-inositol 1,3,4-trisphosphate + phosphate. Its activity is regulated as follows. Activated upon translocation to the sites of synthesis of PtdIns(3,4,5)P3 in the membrane. In terms of biological role, phosphatidylinositol (PtdIns) phosphatase that specifically hydrolyzes the 5-phosphate of phosphatidylinositol-3,4,5-trisphosphate (PtdIns(3,4,5)P3) to produce PtdIns(3,4)P2, thereby negatively regulating the PI3K (phosphoinositide 3-kinase) pathways. Also able to hydrolyze the 5-phosphate of phosphatidylinositol-4,5-bisphosphate (PtdIns(4,5)P3) and inositol 1,3,4,5-tetrakisphosphate. Acts as a negative regulator of B-cell antigen receptor signaling. Mediates signaling from the FC-gamma-RIIB receptor (FCGR2B), playing a central role in terminating signal transduction from activating immune/hematopoietic cell receptor systems. Acts as a negative regulator of myeloid cell proliferation/survival and chemotaxis, mast cell degranulation, immune cells homeostasis, integrin alpha-IIb/beta-3 signaling in platelets and JNK signaling in B-cells. Regulates proliferation of osteoclast precursors, macrophage programming, phagocytosis and activation and is required for endotoxin tolerance. Involved in the control of cell-cell junctions, CD32a signaling in neutrophils and modulation of EGF-induced phospholipase C activity. Key regulator of neutrophil migration, by governing the formation of the leading edge and polarization required for chemotaxis. Modulates FCGR3/CD16-mediated cytotoxicity in NK cells. Mediates the activin/TGF-beta-induced apoptosis through its Smad-dependent expression. This is Phosphatidylinositol 3,4,5-trisphosphate 5-phosphatase 1 (Inpp5d) from Mus musculus (Mouse).